The following is a 309-amino-acid chain: Serine/threonine-protein phosphatase 2A catalytic subunit beta isoform (309 aa).

Positions 57, 59, 85, and 117 each coordinate Mn(2+). His118 serves as the catalytic Proton donor. 2 residues coordinate Mn(2+): His167 and His241. Tyr307 carries the phosphotyrosine modification. A Leucine methyl ester modification is found at Leu309.

This sequence belongs to the PPP phosphatase family. PP-1 subfamily. In terms of assembly, PP2A consists of a common heterodimeric core enzyme (composed of a 36 kDa catalytic subunit (subunit C) and a 65 kDa constant regulatory subunit (PR65) (subunit A)) that associates with a variety of regulatory subunits. Proteins that associate with the core dimer include three families of regulatory subunits B (the R2/B/PR55/B55, R3/B''/PR72/PR130/PR59 and R5/B'/B56 families), the 48 kDa variable regulatory subunit, viral proteins, and cell signaling molecules. Binds PPME1. May indirectly interact with SGO1, most probably through regulatory B56 subunits. Found in a complex with at least ARL2, PPP2CB, PPP2R1A, PPP2R2A, PPP2R5E and TBCD. Interacts with TBCD. Interacts with CTTNBP2NL. Interacts with PTPA. Part of the core of STRIPAK complexes composed of PP2A catalytic and scaffolding subunits, the striatins (PP2A regulatory subunits), the striatin-associated proteins MOB4, STRIP1 and STRIP2, PDCD10 and members of the STE20 kinases, such as STK24 and STK26. It depends on Mn(2+) as a cofactor. Reversibly methyl esterified on Leu-309 by leucine carboxyl methyltransferase 1 (LCMT1) and protein phosphatase methylesterase 1 (PPME1). Carboxyl methylation influences the affinity of the catalytic subunit for the different regulatory subunits, thereby modulating the PP2A holoenzyme's substrate specificity, enzyme activity and cellular localization. In terms of processing, phosphorylation of either threonine (by autophosphorylation-activated protein kinase) or tyrosine results in inactivation of the phosphatase. Auto-dephosphorylation has been suggested as a mechanism for reactivation. Post-translationally, may be monoubiquitinated by NOSIP.

It localises to the cytoplasm. It is found in the nucleus. Its subcellular location is the chromosome. The protein resides in the centromere. The protein localises to the cytoskeleton. It localises to the spindle pole. The catalysed reaction is O-phospho-L-seryl-[protein] + H2O = L-seryl-[protein] + phosphate. It catalyses the reaction O-phospho-L-threonyl-[protein] + H2O = L-threonyl-[protein] + phosphate. Its function is as follows. Catalytic subunit of protein phosphatase 2A (PP2A), a serine/threonine phosphatase involved in the regulation of a wide variety of enzymes, signal transduction pathways, and cellular events. PP2A can modulate the activity of phosphorylase B kinase, casein kinase 2, mitogen-stimulated S6 kinase, and MAP-2 kinase. Part of the striatin-interacting phosphatase and kinase (STRIPAK) complexes. STRIPAK complexes have critical roles in protein (de)phosphorylation and are regulators of multiple signaling pathways including Hippo, MAPK, nuclear receptor and cytoskeleton remodeling. Different types of STRIPAK complexes are involved in a variety of biological processes such as cell growth, differentiation, apoptosis, metabolism and immune regulation. In Bos taurus (Bovine), this protein is Serine/threonine-protein phosphatase 2A catalytic subunit beta isoform (PPP2CB).